The chain runs to 835 residues: MNQIEQKWQYIWQEEKAFEVSNASSKPKYYVLEMLPYPSGKIHVGHVRNYSIGDVIARFMTMQGFNVLHPMGWDAFGLPAENAAINNNSHPKKWTYSNIKNMKKQLKSMGFSYDWSREINSCDPEYYKHEQKFFLELYERNLAYQKESFVNWDPVDNTVLANEQVVDGRGWRSGAIVAKRYLKQWFLKITDYAEELLNEIQNLKEWPEAVRSMQEKWIGKSIGANFHFKIKDNEETTIEVFSTKPETIFGASFIGIAFNHPIIERLVSKTPEILAFITQCSHITRSSKLEKAEKEGVFTGLFVTHPFDSNIVLPVIITNFVLMDYGTGAIFGCPAHDECDHELAVKMNLSIKQVIKADMDVQKTAYTEDGILINSDFLNGLTSNEAKQEVIREFEKLGIGKRSVNYRLKDWGISRQRFWGCPIPMIHCEICGIVPVPYKDLPVTLPDDVNFDGHGNPLDHHPSWKHVNCPKCDKPAVRETDTFDTFFESSWYFMRYCNSNATEMTDKKACDYWLPVDKYIGGIEHAVMHLLYARFFTKVMNEQNYVSVQEPFKGLFTQGMVLHATYKDEHNNWLYPEEVVKKGNEFFHKESNNRVVQGRIEKMSKSKKNLIDLETMQEQYGADAIRLFVLSDSPPEKDLEWSASGIEGCSRFINKLEYMFKAIDSLKDDVNSEVNKELNRLVHFTIKHVAEDIKHFALNRAIARMRELSNSISAEISKDKIDVKTVRHGFNVLVQLLNPFIPHITEEIWQKLGNKERLYNLSFPAFDESMLELDTYIMAVQVNGKLRDTYEFKTSVSEDEIKQVTVSLPKVQKFLEGKEPKKIILVPRKIVNILV.

Positions Pro-36–His-46 match the 'HIGH' region motif. The 'KMSKS' region signature appears at Lys-602–Ser-606. Position 605 (Lys-605) interacts with ATP.

The protein belongs to the class-I aminoacyl-tRNA synthetase family.

The protein localises to the cytoplasm. It catalyses the reaction tRNA(Leu) + L-leucine + ATP = L-leucyl-tRNA(Leu) + AMP + diphosphate. This is Leucine--tRNA ligase from Rickettsia rickettsii (strain Iowa).